An 85-amino-acid polypeptide reads, in one-letter code: Large ribosomal subunit protein bL27 (85 aa).

The protein belongs to the bacterial ribosomal protein bL27 family.

The sequence is that of Large ribosomal subunit protein bL27 from Leptospira biflexa serovar Patoc (strain Patoc 1 / Ames).